Consider the following 1067-residue polypeptide: MDMTKQIVDFEIKSELIGEIDQFEASDYTMAPPEEPKMVEESPQLGHLEDQNRKYSPEREVEPTLQDPSEVVDQMQKDTESVGEVKSPEKDVETELVKSKASPMNDQALTPPPRPLTSSEVVGLRDPEHTELRMCLEAKKSRSLPVSPQPQPNLKLAGSALFEFGQRSSPVETKIKTNPETKPPRRKIVPPSGEGQQFCLRWNNYQSNLTNVFDELLQSESFVDVTLSCEGHSIKAHKMVLSACSPYFQALFYDNPCQHPIIIMRDVSWSDLKALVEFMYKGEINVCQDQINPLLKVAETLKIRGLAEVSAGRGEGGASALPMSAFDDEDEEEELASATAILQQDGDADPDEEMKAKRPRLLPEGVLDLNQRQRKRSRDGSYATPSPSLQGGESEISERGSSGTPGQSQSQPLAMTTSTIVRNPFASPNPQTLEGRNSAMNAVANQRKSPAPTATGHSNGNSGAAMHSPPGGVAVQSALPPHMAAIVPPPPSAMHHHAQQLAAQHQLAHSHAMASALAAAAAGAGAAGAGGAGSGSGSGASAPTGGTGVAGSGAGAAVGSHHDDMEIKPEIAEMIREEERAKMIESGGHGGWMGAAAAATGAASVAADSYQYQLQSMWQKCWNTNQQNLVQQLRFRERGPLKSWRPEAMAEAIFSVLKEGLSLSQAARKFDIPYPTFVLYANRVHNMLGPSLDGGADPRPKARGRPQRILLGMWPEELIRSVIKAVVFRDYREIKEDMSAHQYANGQGHGTYIGGGTTTNGYHSAAAAKLAAQNAALAPPDAGSPLSSMTETLRRQILSQQQQHQQHHQQQAHHQQQPSHHQQQSPHAQSMNMYKSPAYLQRSEIEDQVSAAAAVAAAAAKHQQQQGERRGSENLPDLSALGLMGLPGLNVMPSRGSGGGSGGAAPNSAASYARELSRERERDRERERERELSRQYGSQSRGSSSGSGSAKSLTASQRPGAASPYSAAHYAKHQASAYNKRFLESLPAGIDLEAFANGLLQKSVNKSPRFEDFFPGPGQDMSELFANPDASAAAAAAAYAPPGAIRESPLMKIKLEQQHATELPHED.

Positions Met-30 to Val-121 are disordered. 2 stretches are compositionally biased toward basic and acidic residues: residues His-47–Glu-62 and Lys-86–Lys-98. Tyr-55 carries the phosphotyrosine modification. Residues Ser-56, Ser-87, and Ser-147 each carry the phosphoserine modification. Positions Val-223–Gln-288 constitute a BTB domain. Disordered regions lie at residues Gly-312–Pro-412, Ala-444–His-505, and Gly-525–Asp-563. Residues Phe-326–Leu-335 are compositionally biased toward acidic residues. Phosphoserine is present on Ser-377. The residue at position 384 (Thr-384) is a Phosphothreonine. Low complexity predominate over residues Gly-391–Pro-412. 2 stretches are compositionally biased toward gly residues: residues Gly-525 to Ser-538 and Gly-545 to Ala-556. The HTH psq-type domain occupies Phe-635–Met-687. The segment at residues Arg-645–Pro-690 is a DNA-binding region (H-T-H motif). Positions Asp-697–Arg-708 form a DNA-binding region, a.T hook. 3 disordered regions span residues Gln-796–Gln-829, Ala-860–Ser-879, and Val-891–Ala-967. The segment covering Ala-812–Gln-829 has biased composition (low complexity). The segment covering Ala-904 to Arg-914 has biased composition (low complexity). A compositionally biased stretch (basic and acidic residues) spans Glu-915 to Ser-933. A compositionally biased stretch (low complexity) spans Arg-934–Ser-949.

Leg imaginal disk at the central region of the tarsus and in eye antenna disk at the basal cylinder.

Its subcellular location is the nucleus. In terms of biological role, probably acts as a transcriptional regulator. Required for the specification of the tarsal segment. Also involved in antenna development. The sequence is that of Protein bric-a-brac 2 (bab2) from Drosophila melanogaster (Fruit fly).